Here is a 265-residue protein sequence, read N- to C-terminus: Cyclin-B2-5 (265 aa).

The protein belongs to the cyclin family. Cyclin AB subfamily.

The chain is Cyclin-B2-5 (CYCB2-5) from Arabidopsis thaliana (Mouse-ear cress).